The sequence spans 1575 residues: Mediator of RNA polymerase II transcription subunit 1 (1575 aa).

Residues 1–670 (MKAQGETEDS…YGSSPLERQN (670 aa)) form an interaction with the Mediator complex and THRA region. Residues 16–590 (MSSLLERLHA…SIKDRHESVG (575 aa)) form an interaction with ESR1 region. 2 interaction with the Mediator complex regions span residues 108-212 (FYVE…GYLT) and 215-390 (SGGH…SLQG). Residues 405–644 (PLILNMIRHQ…MAGNTKNHPM (240 aa)) form an interaction with THRA region. The tract at residues 542-789 (PASSPGYGMT…TDILSDIAEE (248 aa)) is interaction with VDR. Serine 588 bears the Phosphoserine mark. The short motif at 604–608 (LTSLL) is the LXXLL motif 1 element. Disordered stretches follow at residues 609–706 (QITG…QTED), 737–760 (HITP…SHPQ), 791–818 (SKLP…HSQS), 874–895 (SQSG…NDDF), and 951–1564 (SGSQ…GEED). Pro residues predominate over residues 622-632 (PTPPHHTPPPV). The tract at residues 622–701 (PTPPHHTPPP…SSRVPPDKPK (80 aa)) is interaction with GATA1. The segment at 622 to 701 (PTPPHHTPPP…SSRVPPDKPK (80 aa)) is interaction with PPARGC1A and THRA. Residues 645–649 (LMNLL) carry the LXXLL motif 2 motif. The span at 655-675 (QDFSTLYGSSPLERQNSSSGS) shows a compositional bias: polar residues. Residues 656–1066 (DFSTLYGSSP…TPPIPKITIQ (411 aa)) are interaction with ESR1. Serine 664 bears the Phosphoserine mark. Basic and acidic residues predominate over residues 696–706 (PPDKPKHQTED). Serine 795 bears the Phosphoserine mark. At threonine 805 the chain carries Phosphothreonine. Positions 808-818 (RDSSSSGHSQS) are enriched in polar residues. Residues 875 to 902 (QSGFGEEYFDESSQSGDNDDFKGFASQA) carry the Integrase domain-binding motif (IBM) motif. A phosphoserine mark is found at serine 887, serine 953, and serine 955. Positions 963-974 (LGKEKTQKRVKE) are enriched in basic and acidic residues. The segment covering 976–986 (NGTGASSGSGP) has biased composition (gly residues). Position 1032 is a phosphothreonine; by MAPK1 or MAPK3 (threonine 1032). Low complexity predominate over residues 1034 to 1051 (PTSTGGSKSPGSSGRSQT). 2 positions are modified to phosphothreonine: threonine 1051 and threonine 1057. Composition is skewed to low complexity over residues 1078-1094 (SSHS…SSGS) and 1101-1152 (SSSS…SQTG). A Phosphoserine modification is found at serine 1158. Over residues 1158 to 1184 (SPITKHGLSSGSSSTKMKPQGKPSSLM) the composition is skewed to polar residues. Lysine 1179 carries the N6-acetyllysine modification. The span at 1185–1197 (NPSISKPNISPSH) shows a compositional bias: low complexity. Position 1209 is a phosphoserine (serine 1209). Position 1217 is a phosphothreonine (threonine 1217). 2 stretches are compositionally biased toward low complexity: residues 1220-1258 (SSKA…GSVS) and 1265-1295 (SNSC…SKGK). Serine 1225 is modified (phosphoserine). The interaction with TP53 stretch occupies residues 1251–1423 (SASSGSVSQK…KPGESGGDGL (173 aa)). Serine 1304 and serine 1349 each carry phosphoserine. Positions 1331-1352 (MGASTNSSNHPMSSKHNTSGGE) are enriched in polar residues. Over residues 1354 to 1366 (QSKREKSDKDKSK) the composition is skewed to basic and acidic residues. Phosphoserine is present on residues serine 1405 and serine 1435. Composition is skewed to polar residues over residues 1427 to 1442 (IASS…SGST) and 1450 to 1484 (PSHS…SPSS). Threonine 1442 is modified (phosphothreonine). Threonine 1459 carries the post-translational modification Phosphothreonine; by MAPK1 or MAPK3. 5 positions are modified to phosphoserine: serine 1465, serine 1467, serine 1481, serine 1483, and serine 1484. Positions 1498-1507 (KHKKHKKEKK) are enriched in basic residues. Lysine 1523 bears the N6-acetyllysine mark. Polar residues predominate over residues 1527-1545 (WSKSPISSDPTASVTNNPI).

The protein belongs to the Mediator complex subunit 1 family. As to quaternary structure, component of the Mediator complex, which is composed of MED1, MED4, MED6, MED7, MED8, MED9, MED10, MED11, MED12, MED13, MED13L, MED14, MED15, MED16, MED17, MED18, MED19, MED20, MED21, MED22, MED23, MED24, MED25, MED26, MED27, MED29, MED30, MED31, CCNC, CDK8 and CDC2L6/CDK11. The MED12, MED13, CCNC and CDK8 subunits form a distinct module termed the CDK8 module. Mediator containing the CDK8 module is less active than Mediator lacking this module in supporting transcriptional activation. Individual preparations of the Mediator complex lacking one or more distinct subunits have been variously termed ARC, CRSP, DRIP, PC2, SMCC and TRAP. This subunit specifically interacts with a number of nuclear receptors in a ligand-dependent fashion including AR, ESR1, ESR2, PPARA, PPARG, RORA, RXRA, RXRG, THRA, THRB and VDR. Interacts with CTNNB1, GABPA, GLI3, PPARGC1A and TP53. Interacts with GATA1 and YWHAH. Interacts with CLOCK; this interaction requires the presence of THRAP3. Interacts with CCAR1. Interacts with NR4A3. Interacts (via IBM motif) with PSIP1 (via IBD domain); phosphorylation increases its affinity for PSIP1. Interacts with USP22. In terms of processing, phosphorylated by MAPK1 or MAPK3 during G2/M phase which may enhance protein stability and promote entry into the nucleolus. Phosphorylation increases its interaction with PSIP1. As to expression, widely expressed in the adult, with high levels of expression in the liver, lung, intestinal mucosa, kidney cortex, thymic cortex, splenic follicle and seminiferous epithelium in testis. Also expressed in the adult heart, brain, spleen and skeletal muscle.

The protein resides in the nucleus. Component of the Mediator complex, a coactivator involved in the regulated transcription of nearly all RNA polymerase II-dependent genes. Mediator functions as a bridge to convey information from gene-specific regulatory proteins to the basal RNA polymerase II transcription machinery. Mediator is recruited to promoters by direct interactions with regulatory proteins and serves as a scaffold for the assembly of a functional preinitiation complex with RNA polymerase II and the general transcription factors. Essential for embryogenesis, including development of the central nervous system, heart, liver and placenta and for erythropoiesis. Also required for normal transcriptional control of thyroid-stimulating hormone beta (TSHB) in the pituitary. Acts as a coactivator for GATA1-mediated transcriptional activation during erythroid differentiation of K562 erythroleukemia cells. The polypeptide is Mediator of RNA polymerase II transcription subunit 1 (Med1) (Mus musculus (Mouse)).